Reading from the N-terminus, the 380-residue chain is Proline iminopeptidase (380 aa).

Positions 98–360 (PVVFLHGGPG…IVYDAGHSAN (263 aa)) constitute an AB hydrolase-1 domain. The active-site Nucleophile is the Ser172. Asp329 is a catalytic residue. His357 acts as the Proton donor in catalysis.

The protein belongs to the peptidase S33 family.

It localises to the cytoplasm. It catalyses the reaction Release of N-terminal proline from a peptide.. Its function is as follows. Specifically catalyzes the removal of N-terminal proline residues from peptides. The protein is Proline iminopeptidase (PIP) of Arabidopsis thaliana (Mouse-ear cress).